We begin with the raw amino-acid sequence, 497 residues long: Probable gamma-aminobutyrate transaminase 2, mitochondrial (497 aa).

The transit peptide at 1–37 (MNLIKHAAFAASFQGETDCTSHASARKFSTSGSSPLL) directs the protein to the mitochondrion. Residue 153–154 (GS) participates in pyridoxal 5'-phosphate binding. Tyr-186 is a binding site for substrate. Asp-293 is a pyridoxal 5'-phosphate binding site. A substrate-binding site is contributed by Lys-322. Position 322 is an N6-(pyridoxal phosphate)lysine (Lys-322).

Belongs to the class-III pyridoxal-phosphate-dependent aminotransferase family.

It localises to the mitochondrion. The enzyme catalyses 4-aminobutanoate + pyruvate = succinate semialdehyde + L-alanine. The catalysed reaction is 4-aminobutanoate + glyoxylate = succinate semialdehyde + glycine. Transaminase that degrades gamma-amino butyric acid (GABA). This is Probable gamma-aminobutyrate transaminase 2, mitochondrial from Oryza sativa subsp. indica (Rice).